The chain runs to 510 residues: ATP synthase subunit alpha (510 aa).

G169–T176 is a binding site for ATP.

This sequence belongs to the ATPase alpha/beta chains family. As to quaternary structure, F-type ATPases have 2 components, CF(1) - the catalytic core - and CF(0) - the membrane proton channel. CF(1) has five subunits: alpha(3), beta(3), gamma(1), delta(1), epsilon(1). CF(0) has four main subunits: a(1), b(1), b'(1) and c(9-12).

It localises to the cell inner membrane. It catalyses the reaction ATP + H2O + 4 H(+)(in) = ADP + phosphate + 5 H(+)(out). Functionally, produces ATP from ADP in the presence of a proton gradient across the membrane. The alpha chain is a regulatory subunit. The protein is ATP synthase subunit alpha of Rhodopseudomonas palustris (strain ATCC BAA-98 / CGA009).